The following is a 439-amino-acid chain: Choline monooxygenase, chloroplastic (439 aa).

A chloroplast-targeting transit peptide spans 1-60 (MMAASASATTMLLKYPTTVCGIPNPSSNNNNDPSNNIVSIPQNTTNPTLKSRTPNKITTN). A compositionally biased stretch (low complexity) spans 24 to 41 (NPSSNNNNDPSNNIVSIP). Residues 24-54 (NPSSNNNNDPSNNIVSIPQNTTNPTLKSRTP) are disordered. Polar residues predominate over residues 42 to 54 (QNTTNPTLKSRTP). The Rieske domain occupies 120 to 227 (WQVAGISDQI…VAVWGPFVLI (108 aa)). [2Fe-2S] cluster-binding residues include Cys-162, His-164, Cys-181, and His-184. Positions 287 and 292 each coordinate Fe cation.

In terms of assembly, homotrimer or homodimer. [2Fe-2S] cluster is required as a cofactor. Fe cation serves as cofactor. It depends on Mg(2+) as a cofactor. Expressed in leaves.

Its subcellular location is the plastid. It localises to the chloroplast stroma. The enzyme catalyses choline + 2 reduced [2Fe-2S]-[ferredoxin] + O2 + 2 H(+) = betaine aldehyde hydrate + 2 oxidized [2Fe-2S]-[ferredoxin] + H2O. It participates in amine and polyamine biosynthesis; betaine biosynthesis via choline pathway; betaine aldehyde from choline (monooxygenase route): step 1/1. Its function is as follows. Catalyzes the first step of the osmoprotectant glycine betaine synthesis. In Spinacia oleracea (Spinach), this protein is Choline monooxygenase, chloroplastic (CMO).